Consider the following 625-residue polypeptide: MSVVSTTPASQDACYISLLGLAEYFRTSQPPNIKKCIQCLQALFTFQPPSKVEARTHLQMGQVLMAYTCNIDLARRHLEQAWSIAEPLMNFDDVKFDTASLLAQLHLKTEQSSHAKAMLRRAVELSQNNVYWHCKLLLQLSQIHASDREYSLASDLLAVGAESAEEAGATYLKVLFLLSRAMILMIERKTNDVLALLNSAGQIIDNNIPNPHQKEYLKVFFLVLQVCYYLALGQVKTVKPSLKQLQMSIQTIMAPNWPSDETIFGGNQLEMFVWLPKEQLYVLVYLVTVSHSMMAGYMDKAQKYTEKALTQIEKLKQQEDKSILSVFKVILLEHIVMCRMVMGNRELAIREIAAARDVCLAVPHRNLLKRHSAQLHCLIGLYSMSTSFFEHAERQFLVCVNETTERDLKLFANLNLAIIYLRTKREADLKQILDAVSTENTHTYSSQALMGGFYYVQGLHAFHKNSFHEAKRFLRETLKMANAEDLNRLTSCSLVLLSHVFLSIGNSKESMNMVTPAMQLASKIPDIHVQLWGSAILKDLHRMSKDAQHEKEAYANHVKYSENLIADQRKCVQSAHHELINWFQGNPPVTSNSSLNPAVTVPTTETSTSALQQPQQPAAQFGQFY.

TPR repeat units lie at residues 96 to 129, 451 to 484, and 491 to 524; these read FDTA…SQNN, GGFY…ANAE, and SCSL…ASKI. A compositionally biased stretch (polar residues) spans 600 to 611; sequence TVPTTETSTSAL. Residues 600 to 625 form a disordered region; sequence TVPTTETSTSALQQPQQPAAQFGQFY. Residues 612 to 625 are compositionally biased toward low complexity; it reads QQPQQPAAQFGQFY.

Belongs to the SCC4/mau-2 family. In terms of assembly, interacts with Nipped-B to form the cohesin loading complex.

The protein localises to the nucleus. The protein resides in the nucleoplasm. Its function is as follows. Required for association of the cohesin complex with chromatin during interphase. Plays a role in sister chromatid cohesion and normal progression through prometaphase. The chain is MAU2 chromatid cohesion factor homolog from Drosophila mojavensis (Fruit fly).